The sequence spans 293 residues: Pyridoxal 5'-phosphate synthase subunit PdxS (293 aa).

D23 contributes to the D-ribose 5-phosphate binding site. K80 (schiff-base intermediate with D-ribose 5-phosphate) is an active-site residue. G152 serves as a coordination point for D-ribose 5-phosphate. R164 contributes to the D-glyceraldehyde 3-phosphate binding site. Residues G213 and 234–235 contribute to the D-ribose 5-phosphate site; that span reads GS.

Belongs to the PdxS/SNZ family. In terms of assembly, in the presence of PdxT, forms a dodecamer of heterodimers.

It carries out the reaction aldehydo-D-ribose 5-phosphate + D-glyceraldehyde 3-phosphate + L-glutamine = pyridoxal 5'-phosphate + L-glutamate + phosphate + 3 H2O + H(+). It functions in the pathway cofactor biosynthesis; pyridoxal 5'-phosphate biosynthesis. In terms of biological role, catalyzes the formation of pyridoxal 5'-phosphate from ribose 5-phosphate (RBP), glyceraldehyde 3-phosphate (G3P) and ammonia. The ammonia is provided by the PdxT subunit. Can also use ribulose 5-phosphate and dihydroxyacetone phosphate as substrates, resulting from enzyme-catalyzed isomerization of RBP and G3P, respectively. The chain is Pyridoxal 5'-phosphate synthase subunit PdxS from Chloroflexus aggregans (strain MD-66 / DSM 9485).